A 72-amino-acid chain; its full sequence is Translation initiation factor IF-1 2 (72 aa).

The 72-residue stretch at 1–72 (MAKDDVIQMQ…SRARIVFRTK (72 aa)) folds into the S1-like domain.

Belongs to the IF-1 family. In terms of assembly, component of the 30S ribosomal translation pre-initiation complex which assembles on the 30S ribosome in the order IF-2 and IF-3, IF-1 and N-formylmethionyl-tRNA(fMet); mRNA recruitment can occur at any time during PIC assembly.

The protein localises to the cytoplasm. One of the essential components for the initiation of protein synthesis. Stabilizes the binding of IF-2 and IF-3 on the 30S subunit to which N-formylmethionyl-tRNA(fMet) subsequently binds. Helps modulate mRNA selection, yielding the 30S pre-initiation complex (PIC). Upon addition of the 50S ribosomal subunit IF-1, IF-2 and IF-3 are released leaving the mature 70S translation initiation complex. In Cupriavidus necator (strain ATCC 17699 / DSM 428 / KCTC 22496 / NCIMB 10442 / H16 / Stanier 337) (Ralstonia eutropha), this protein is Translation initiation factor IF-1 2.